A 180-amino-acid polypeptide reads, in one-letter code: Probable DNA replication complex GINS protein PSF2 (180 aa).

It belongs to the GINS2/PSF2 family. In terms of assembly, component of the GINS complex which is a heterotetramer of gins1, gins2, gins3 and gins4.

It is found in the nucleus. Its function is as follows. Required for correct functioning of the GINS complex, a complex that plays an essential role in the initiation of DNA replication, and progression of DNA replication forks. GINS complex is a core component of CDC45-MCM-GINS (CMG) helicase, the molecular machine that unwinds template DNA during replication, and around which the replisome is built. The protein is Probable DNA replication complex GINS protein PSF2 (psf-2) of Caenorhabditis elegans.